Consider the following 96-residue polypeptide: Large ribosomal subunit protein uL23 (96 aa).

The protein belongs to the universal ribosomal protein uL23 family. In terms of assembly, part of the 50S ribosomal subunit. Contacts protein L29, and trigger factor when it is bound to the ribosome.

In terms of biological role, one of the early assembly proteins it binds 23S rRNA. One of the proteins that surrounds the polypeptide exit tunnel on the outside of the ribosome. Forms the main docking site for trigger factor binding to the ribosome. The protein is Large ribosomal subunit protein uL23 of Caldanaerobacter subterraneus subsp. tengcongensis (strain DSM 15242 / JCM 11007 / NBRC 100824 / MB4) (Thermoanaerobacter tengcongensis).